The chain runs to 609 residues: Chaperone protein DnaK (609 aa).

At threonine 173 the chain carries Phosphothreonine; by autocatalysis. Basic and acidic residues predominate over residues 525 to 542 (ENISDEDKKNAEEKKDAL). 2 disordered regions span residues 525-554 (ENIS…IDDI) and 574-609 (EQAQ…EDKK). A compositionally biased stretch (low complexity) spans 574–587 (EQAQQAQQQGQEEQ). Basic and acidic residues predominate over residues 597-609 (ADFKEVKDDEDKK).

This sequence belongs to the heat shock protein 70 family.

In terms of biological role, acts as a chaperone. In Staphylococcus epidermidis (strain ATCC 35984 / DSM 28319 / BCRC 17069 / CCUG 31568 / BM 3577 / RP62A), this protein is Chaperone protein DnaK.